A 633-amino-acid chain; its full sequence is DNA mismatch repair protein MutL (633 aa).

Belongs to the DNA mismatch repair MutL/HexB family.

Functionally, this protein is involved in the repair of mismatches in DNA. It is required for dam-dependent methyl-directed DNA mismatch repair. May act as a 'molecular matchmaker', a protein that promotes the formation of a stable complex between two or more DNA-binding proteins in an ATP-dependent manner without itself being part of a final effector complex. The protein is DNA mismatch repair protein MutL of Macrococcus caseolyticus (strain JCSC5402) (Macrococcoides caseolyticum).